The following is a 62-amino-acid chain: MKVLILIMIIASLMIMGVEMDRDSCVDKSRCAKYGYYQECQDCCKNAGHNGGTCMFFKCKCA.

A signal peptide spans 1 to 20 (MKVLILIMIIASLMIMGVEM). 4 disulfide bridges follow: Cys-25–Cys-43, Cys-31–Cys-54, Cys-40–Cys-59, and Cys-44–Cys-61.

It belongs to the ergtoxin family. Gamma-KTx 1 subfamily. After protein storage at -20 Celsius degrees during a couple of months, the Met-55 of a small number of toxins is naturally oxidized. This oxidized form is about three orders of magnitude less efficient (IC(50)=15 uM) than non-oxidized form. In terms of tissue distribution, expressed by the venom gland.

The protein localises to the secreted. Blocks human and rat Kv11.1/KCNH2/ERG1 and Kv11.3/KCNH7/ERG3, as well as rat (but not human) Kv11.2/KCNH6/ERG2 by binding to channel outer vestibule (S5P domain) with a 1:1 stoichiometry. Inhibition data are the following: hERG1 (reversible, IC(50)~7 nM), rERG1 (reversible, Kd=6.8 nM), rERG2 (irreversible, Kd=2.8 nM), hERG3 (irreversible, Kd=4.05 nM) and rERG3 (reversible, Kd=38.1 nM) potassium channels. The toxin potency is not affected by elevating potassium ion concentration from 2 to 98 mM. This toxin only blocks channels in a closed state. At high toxin concentrations, block of Kv11.1/KCNH2/ERG1 macroscopic current is incomplete (93.5%). This suggests a kinetic mechanism model with two different states of toxin-channel binding (T+C=TC*=TC; in the TC* state, the toxin binds the channel but does not occlude the pore, whereas in the TC state the toxin binds and occludes the pore). In this model, incomplete block is explained by the relatively fast dissociation rate from the blocked channel conformation (TC) relative to the rate of conversion of the toxin-channel encounter complex (TC*) to the blocked channel conformation (TC). The polypeptide is Potassium channel toxin gamma-KTx 1.1 (Centruroides noxius (Mexican scorpion)).